We begin with the raw amino-acid sequence, 389 residues long: Formate-dependent phosphoribosylglycinamide formyltransferase (389 aa).

N(1)-(5-phospho-beta-D-ribosyl)glycinamide contacts are provided by residues glutamate 15–leucine 16 and glutamate 75. Residues arginine 107, lysine 148, serine 153–glutamine 158, glutamate 188–leucine 191, and glutamate 196 contribute to the ATP site. Residues aspartate 112–leucine 302 enclose the ATP-grasp domain. Glutamate 261 and glutamate 273 together coordinate Mg(2+). N(1)-(5-phospho-beta-D-ribosyl)glycinamide is bound by residues aspartate 280, lysine 350, and arginine 357–arginine 358.

The protein belongs to the PurK/PurT family. Homodimer.

The catalysed reaction is N(1)-(5-phospho-beta-D-ribosyl)glycinamide + formate + ATP = N(2)-formyl-N(1)-(5-phospho-beta-D-ribosyl)glycinamide + ADP + phosphate + H(+). It participates in purine metabolism; IMP biosynthesis via de novo pathway; N(2)-formyl-N(1)-(5-phospho-D-ribosyl)glycinamide from N(1)-(5-phospho-D-ribosyl)glycinamide (formate route): step 1/1. In terms of biological role, involved in the de novo purine biosynthesis. Catalyzes the transfer of formate to 5-phospho-ribosyl-glycinamide (GAR), producing 5-phospho-ribosyl-N-formylglycinamide (FGAR). Formate is provided by PurU via hydrolysis of 10-formyl-tetrahydrofolate. The chain is Formate-dependent phosphoribosylglycinamide formyltransferase from Synechococcus sp. (strain WH7803).